A 79-amino-acid polypeptide reads, in one-letter code: Acyl carrier protein (79 aa).

The 76-residue stretch at 4-79 (EQILVDVQEA…DVVAYIETKL (76 aa)) folds into the Carrier domain. Residue S39 is modified to O-(pantetheine 4'-phosphoryl)serine.

This sequence belongs to the acyl carrier protein (ACP) family. Post-translationally, 4'-phosphopantetheine is transferred from CoA to a specific serine of apo-ACP by AcpS. This modification is essential for activity because fatty acids are bound in thioester linkage to the sulfhydryl of the prosthetic group.

It localises to the cytoplasm. It participates in lipid metabolism; fatty acid biosynthesis. In terms of biological role, carrier of the growing fatty acid chain in fatty acid biosynthesis. This Exiguobacterium sp. (strain ATCC BAA-1283 / AT1b) protein is Acyl carrier protein.